Consider the following 654-residue polypeptide: MEVAMVSAESSGCNSHMPYGYAAQARARERERLAHSRAAAAAAVAAATAAVEGTGGSGGGPHHHHQTRGAYSSHDPQGSRGSRRRRRQRTEKKKLHHRQSSFPHCSDLMPSGSEEKILRELSEEEEDEEEEEEEEEEGRFYYSEEDHGDGCSYTDLLPQDDGGGGGYSSVRYSDCCERVVINVSGLRFETQMKTLAQFPETLLGDPEKRTQYFDPLRNEYFFDRNRPSFDAILYYYQSGGRLKRPVNVPFDIFTEEVKFYQLGEEALLKFREDEGFVREEEDRALPENEFKKQIWLLFEYPESSSPARGIAIVSVLVILISIVIFCLETLPEFRDDRDLIMALSAGGHSRLLNDTSAPHLENSGHTIFNDPFFIVETVCIVWFSFEFVVRCFACPSQALFFKNIMNIIDIVSILPYFITLGTDLAQQQGGGNGQQQQAMSFAILRIIRLVRVFRIFKLSRHSKGLQILGHTLRASMRELGLLIFFLFIGVILFSSAVYFAEADEPTTHFQSIPDAFWWAVVTMTTVGYGDMKPITVGGKIVGSLCAIAGVLTIALPVPVIVSNFNYFYHRETENEEQTQLTQNAVSCPYLPSNLLKKFRSSTSSSLGDKSEYLEMEEGVKESLCGKEEKCQGKGDESETDKNNCSNAKAVETDV.

Residues 1–305 (MEVAMVSAES…LLFEYPESSS (305 aa)) lie on the Cytoplasmic side of the membrane. The disordered stretch occupies residues 24–145 (QARARERERL…EEGRFYYSEE (122 aa)). Positions 36–50 (SRAAAAAAVAAATAA) are enriched in low complexity. Residues 81 to 99 (GSRRRRRQRTEKKKLHHRQ) are compositionally biased toward basic residues. A Phosphoserine modification is found at Ser122. Residues 122 to 137 (SEEEEDEEEEEEEEEE) show a composition bias toward acidic residues. Residues 306–327 (PARGIAIVSVLVILISIVIFCL) traverse the membrane as a helical segment. Residues 328 to 371 (ETLPEFRDDRDLIMALSAGGHSRLLNDTSAPHLENSGHTIFNDP) lie on the Extracellular side of the membrane. N-linked (GlcNAc...) asparagine glycosylation occurs at Asn353. Residues 372-393 (FFIVETVCIVWFSFEFVVRCFA) traverse the membrane as a helical segment. At 394–404 (CPSQALFFKNI) the chain is on the cytoplasmic side. Residues 405 to 425 (MNIIDIVSILPYFITLGTDLA) traverse the membrane as a helical segment. Topologically, residues 426–440 (QQQGGGNGQQQQAMS) are extracellular. The chain crosses the membrane as a helical; Voltage-sensor span at residues 441–461 (FAILRIIRLVRVFRIFKLSRH). The Cytoplasmic segment spans residues 462–476 (SKGLQILGHTLRASM). Residues 463–476 (KGLQILGHTLRASM) are S4-S5 linker. The chain crosses the membrane as a helical span at residues 477-498 (RELGLLIFFLFIGVILFSSAVY). Residues 499-512 (FAEADEPTTHFQSI) lie on the Extracellular side of the membrane. Positions 513–524 (PDAFWWAVVTMT) form an intramembrane region, helical. A Selectivity filter motif is present at residues 525 to 530 (TVGYGD). An intramembrane segment occupies 525-532 (TVGYGDMK). Residues 533–539 (PITVGGK) lie on the Extracellular side of the membrane. Residues 540–568 (IVGSLCAIAGVLTIALPVPVIVSNFNYFY) form a helical membrane-spanning segment. The Cytoplasmic portion of the chain corresponds to 569-654 (HRETENEEQT…SNAKAVETDV (86 aa)). Ser600 is modified (phosphoserine; by PKA). Positions 630–641 (CQGKGDESETDK) are enriched in basic and acidic residues. The tract at residues 630-654 (CQGKGDESETDKNNCSNAKAVETDV) is disordered. Residues 652-654 (TDV) carry the PDZ-binding motif.

It belongs to the potassium channel family. A (Shaker) (TC 1.A.1.2) subfamily. Kv1.4/KCNA4 sub-subfamily. As to quaternary structure, homotetramer and heterotetramer of potassium channel proteins. Interacts with KCNAB1 and KCNAB2. Interacts with DLG1, DLG2 and DLG4 via their PDZ domains. Interacts with SIGMAR1. Detected in a complex with KCNA1. Interacts with KCNA2. Part of a complex containing KCNA1, KCNAB1 and LGI1. Interacts (via cytoplasmic N-terminal domain) with KCNRG. As to expression, expressed in the brain, lens and retina.

It is found in the cell membrane. Its subcellular location is the cell projection. It localises to the axon. It carries out the reaction K(+)(in) = K(+)(out). Functionally, voltage-gated potassium channel that mediates transmembrane potassium transport in excitable membranes. Forms tetrameric potassium-selective channels through which potassium ions pass in accordance with their electrochemical gradient. The channel alternates between opened and closed conformations in response to the voltage difference across the membrane. Can form functional homotetrameric channels and heterotetrameric channels that contain variable proportions of KCNA1, KCNA2, KCNA4, KCNA5, and possibly other family members as well; channel properties depend on the type of alpha subunits that are part of the channel. Channel properties are modulated by cytoplasmic beta subunits that regulate the subcellular location of the alpha subunits and promote rapid inactivation. In vivo, membranes probably contain a mixture of heteromeric potassium channel complexes, making it difficult to assign currents observed in intact tissues to any particular potassium channel family member. Homotetrameric KCNA4 forms a potassium channel that opens in response to membrane depolarization, followed by rapid spontaneous channel closure. Likewise, a heterotetrameric channel formed by KCNA1 and KCNA4 shows rapid inactivation. This chain is Potassium voltage-gated channel subfamily A member 4 (Kcna4), found in Mus musculus (Mouse).